The chain runs to 194 residues: Peptidyl-tRNA hydrolase (194 aa).

Tyr-17 is a binding site for tRNA. His-22 serves as the catalytic Proton acceptor. Residues Phe-68, Asn-70, and Asn-116 each contribute to the tRNA site.

Belongs to the PTH family. As to quaternary structure, monomer.

The protein resides in the cytoplasm. The catalysed reaction is an N-acyl-L-alpha-aminoacyl-tRNA + H2O = an N-acyl-L-amino acid + a tRNA + H(+). Functionally, hydrolyzes ribosome-free peptidyl-tRNAs (with 1 or more amino acids incorporated), which drop off the ribosome during protein synthesis, or as a result of ribosome stalling. In terms of biological role, catalyzes the release of premature peptidyl moieties from peptidyl-tRNA molecules trapped in stalled 50S ribosomal subunits, and thus maintains levels of free tRNAs and 50S ribosomes. This Pasteurella multocida (strain Pm70) protein is Peptidyl-tRNA hydrolase.